The primary structure comprises 412 residues: Tyrosine--tRNA ligase (412 aa).

A 'HIGH' region motif is present at residues 50-59 (PTGTDIHLGH). The 'KMSKS' region motif lies at 244–248 (KMSKS). An ATP-binding site is contributed by Lys-247. The 64-residue stretch at 348–411 (VKFFYLLSSL…IGKKIIKRFE (64 aa)) folds into the S4 RNA-binding domain.

Belongs to the class-I aminoacyl-tRNA synthetase family. TyrS type 2 subfamily. As to quaternary structure, homodimer.

It localises to the cytoplasm. It catalyses the reaction tRNA(Tyr) + L-tyrosine + ATP = L-tyrosyl-tRNA(Tyr) + AMP + diphosphate + H(+). Catalyzes the attachment of tyrosine to tRNA(Tyr) in a two-step reaction: tyrosine is first activated by ATP to form Tyr-AMP and then transferred to the acceptor end of tRNA(Tyr). The protein is Tyrosine--tRNA ligase of Prochlorococcus marinus (strain MIT 9312).